The chain runs to 886 residues: Alanine--tRNA ligase (886 aa).

H568, H572, C670, and H674 together coordinate Zn(2+).

The protein belongs to the class-II aminoacyl-tRNA synthetase family. The cofactor is Zn(2+).

It localises to the cytoplasm. It catalyses the reaction tRNA(Ala) + L-alanine + ATP = L-alanyl-tRNA(Ala) + AMP + diphosphate. Functionally, catalyzes the attachment of alanine to tRNA(Ala) in a two-step reaction: alanine is first activated by ATP to form Ala-AMP and then transferred to the acceptor end of tRNA(Ala). Also edits incorrectly charged Ser-tRNA(Ala) and Gly-tRNA(Ala) via its editing domain. The polypeptide is Alanine--tRNA ligase (Prochlorococcus marinus (strain NATL1A)).